The primary structure comprises 371 residues: Tetraacyldisaccharide 4'-kinase (371 aa).

48–55 is an ATP binding site; sequence SAGGTGKT.

Belongs to the LpxK family.

It carries out the reaction a lipid A disaccharide + ATP = a lipid IVA + ADP + H(+). It functions in the pathway glycolipid biosynthesis; lipid IV(A) biosynthesis; lipid IV(A) from (3R)-3-hydroxytetradecanoyl-[acyl-carrier-protein] and UDP-N-acetyl-alpha-D-glucosamine: step 6/6. In terms of biological role, transfers the gamma-phosphate of ATP to the 4'-position of a tetraacyldisaccharide 1-phosphate intermediate (termed DS-1-P) to form tetraacyldisaccharide 1,4'-bis-phosphate (lipid IVA). This chain is Tetraacyldisaccharide 4'-kinase, found in Chlorobium chlorochromatii (strain CaD3).